A 93-amino-acid polypeptide reads, in one-letter code: Protein 6 (93 aa).

The segment covering 1–16 has biased composition (polar residues); that stretch reads MSSQQETNDKSNTQGH. The interval 1–52 is disordered; that stretch reads MSSQQETNDKSNTQGHPETDPEGKTGTDTGNTEDSPPDTDNVPITDDAIMDD.

Its subcellular location is the virion. This chain is Protein 6 (6), found in Rice yellow stunt virus (RYSV).